A 99-amino-acid chain; its full sequence is Nucleoid-associated protein SPy_1862/M5005_Spy1580 (99 aa).

The protein belongs to the YbaB/EbfC family. In terms of assembly, homodimer.

It localises to the cytoplasm. It is found in the nucleoid. In terms of biological role, binds to DNA and alters its conformation. May be involved in regulation of gene expression, nucleoid organization and DNA protection. The sequence is that of Nucleoid-associated protein SPy_1862/M5005_Spy1580 from Streptococcus pyogenes serotype M1.